Consider the following 390-residue polypeptide: MLLLILLFFKGLVCHEKSIVGPQPLGWHHPAEAEEPLIFRLLHIASFKNHSWSHSQASAWIGDLQTHGWNSTMGTIQFLKPWSQGDFSKEELKNFEALFRLYFHDFPREVHAFAHQFQFEYPFELQISGGCKNVGKTSENFLNGAYQGSDLLSFQRSSWEPSPGAGSRAQKVCEVLSYYKDITEIVQSLLSSVCPRFLSGLIAAGKSELERQVKPEVWLSRGPSPGRGRLQLVCHVSGFHPKPVWVMWMKGQQEQKGTKTGDIPNADETWYLQATLDVAEREATGLSCRVKHSSLGGHDIIIHWGGYSILLILMYVAVIVTLVTLIVMGSWHRKQSSNRNVLSSYISNPTFPLENDTQCPRSSALQLHSAQESWIKNRILKWKRSLNQFW.

Residues 1–14 (MLLLILLFFKGLVC) form the signal peptide. The propeptide at 15–33 (HEKSIVGPQPLGWHHPAEA) is removed in sCD1e. Asparagine 49 and asparagine 70 each carry an N-linked (GlcNAc...) asparagine glycan. 2 cysteine pairs are disulfide-bonded: cysteine 131/cysteine 194 and cysteine 234/cysteine 288. The Ig-like domain maps to 215–306 (PEVWLSRGPS…GHDIIIHWGG (92 aa)). The helical transmembrane segment at 305–325 (GGYSILLILMYVAVIVTLVTL) threads the bilayer.

As to quaternary structure, heterodimer with B2M (beta-2-microglobulin). The association with B2M appears to be facilitated by the presence of the propeptide. Mono-ubiquitinated. Post-translationally, proteolytically cleaved in endosomes to yield a soluble form.

It localises to the golgi apparatus membrane. The protein resides in the early endosome. It is found in the late endosome. Its subcellular location is the lysosome lumen. T-cell surface glycoprotein CD1e, soluble is required for the presentation of glycolipid antigens on the cell surface. The membrane-associated form is not active. This Cavia porcellus (Guinea pig) protein is T-cell surface glycoprotein CD1e, membrane-associated (CD1E).